Reading from the N-terminus, the 251-residue chain is Sugar fermentation stimulation protein homolog (251 aa).

It belongs to the SfsA family.

The sequence is that of Sugar fermentation stimulation protein homolog from Prochlorococcus marinus (strain MIT 9313).